The sequence spans 266 residues: Apolipoprotein A-I (266 aa).

Positions 1-18 (MKAVVLTLAVLFLTGSQA) are cleaved as a signal peptide. Repeat copies occupy residues 67-88 (LKLLDNWDSLTTSFSKLREQLG) and 89-110 (PVTQEFWDNLEKETEALRQEMN). Positions 67-266 (LKLLDNWDSL…EEASKKLNAQ (200 aa)) are 10 X approximate tandem repeats. Methionine sulfoxide is present on Met-109. A 3; half-length repeat occupies 111–121 (KDVEEMKTKVQ). 5 consecutive repeat copies span residues 122–143 (PYLDEFQKKWQEEVELYRQKVE), 144–165 (PLGSELREGARQKLQELQEKLS), 166–187 (PLGEELRDRARTHVDSLRTQLA), 188–209 (PYSEELRQRLASRLEALKESGG), and 210–231 (ASLADYHAKASEQLSALSEKAK). The stretch at 232-242 (PALEDLRQGLL) is one 9; half-length repeat. The stretch at 243–266 (PVLESFKVSLLSALEEASKKLNAQ) is repeat 10.

Belongs to the apolipoprotein A1/A4/E family. As to quaternary structure, homodimer. Interacts with APOA1BP and CLU. Component of a sperm activating protein complex (SPAP), consisting of APOA1, an immunoglobulin heavy chain, an immunoglobulin light chain and albumin. Interacts with NDRG1. Interacts with SCGB3A2. Interacts with NAXE and YJEFN3. Post-translationally, glycosylated. Palmitoylated. In terms of processing, phosphorylation sites are present in the extracellular medium. Major protein of plasma HDL, also found in chylomicrons.

The protein localises to the secreted. In terms of biological role, participates in the reverse transport of cholesterol from tissues to the liver for excretion by promoting cholesterol efflux from tissues and by acting as a cofactor for the lecithin cholesterol acyltransferase (LCAT). As part of the SPAP complex, activates spermatozoa motility. The protein is Apolipoprotein A-I (APOA1) of Carlito syrichta (Philippine tarsier).